Consider the following 129-residue polypeptide: Photosystem II extrinsic protein V (129 aa).

Heme c-binding residues include cysteine 35, cysteine 38, histidine 39, and histidine 90.

Belongs to the cytochrome c family. PsbV subfamily. As to quaternary structure, PSII is composed of 1 copy each of membrane proteins PsbA, PsbB, PsbC, PsbD, PsbE, PsbF, PsbH, PsbI, PsbJ, PsbK, PsbL, PsbM, PsbT, PsbX, PsbY, PsbZ, Psb30/Ycf12, peripheral proteins PsbO, CyanoQ (PsbQ), PsbU, PsbV and a large number of cofactors. It forms dimeric complexes. Homodimer in crystal structure. Requires heme c as cofactor.

It localises to the cellular thylakoid membrane. One of the extrinsic, lumenal subunits of photosystem II (PSII). PSII is a light-driven water plastoquinone oxidoreductase, using light energy to abstract electrons from H(2)O, generating a proton gradient subsequently used for ATP formation. The extrinsic proteins stabilize the structure of photosystem II oxygen-evolving complex (OEC), the ion environment of oxygen evolution and protect the OEC against heat-induced inactivation. Low-potential cytochrome c that plays a role in the OEC of PSII. The polypeptide is Photosystem II extrinsic protein V (Limnospira maxima (Arthrospira maxima)).